A 237-amino-acid polypeptide reads, in one-letter code: MSFLKSFPPPGPAEGLLRQQPDTEAVLNGKGLGTGTLYIAESRLSWLDGSGLGFSLEYPTISLHALSRDRSDCLGEHLYVMVNAKFEEESKEPVADEEEEDSDDDVEPITEFRFVPSDKSALEAMFTAMCECQALHPDPEDEDSDDYDGEEYDVEAHEQGQGDIPTFYTYEEGLSHLTAEGQATQERLEGMLSQSVSCQYNMAGVRTEDLIRDYEDGMEVDTTPTVAGQFEDADVDH.

Residue serine 2 is modified to N-acetylserine. A phosphoserine mark is found at serine 102, serine 144, serine 193, and serine 195. A Phosphothreonine modification is found at threonine 223.

It belongs to the pICln (TC 1.A.47) family. As to quaternary structure, component of the methylosome, a 20S complex containing at least PRMT5/SKB1, WDR77/MEP50 and CLNS1A/pICln. May mediate SNRPD1 and SNRPD3 methylation. Forms a 6S pICln-Sm complex composed of CLNS1A/pICln, SNRPD1, SNRPD2, SNRPE, SNRPF and SNRPG; ring-like structure where CLNS1A/pICln mimics additional Sm proteins and which is unable to assemble into the core snRNP. Interacts with LSM10 and LSM11.

The protein localises to the cytoplasm. The protein resides in the cytosol. It is found in the nucleus. It localises to the cytoskeleton. Functionally, involved in both the assembly of spliceosomal snRNPs and the methylation of Sm proteins. Chaperone that regulates the assembly of spliceosomal U1, U2, U4 and U5 small nuclear ribonucleoproteins (snRNPs), the building blocks of the spliceosome, and thereby plays an important role in the splicing of cellular pre-mRNAs. Most spliceosomal snRNPs contain a common set of Sm proteins SNRPB, SNRPD1, SNRPD2, SNRPD3, SNRPE, SNRPF and SNRPG that assemble in a heptameric protein ring on the Sm site of the small nuclear RNA to form the core snRNP (Sm core). In the cytosol, the Sm proteins SNRPD1, SNRPD2, SNRPE, SNRPF and SNRPG are trapped in an inactive 6S pICln-Sm complex by the chaperone CLNS1A that controls the assembly of the core snRNP. Dissociation by the SMN complex of CLNS1A from the trapped Sm proteins and their transfer to an SMN-Sm complex triggers the assembly of core snRNPs and their transport to the nucleus. This Pongo abelii (Sumatran orangutan) protein is Methylosome subunit pICln (CLNS1A).